Reading from the N-terminus, the 212-residue chain is Adenylate kinase (212 aa).

10 to 15 (GAGKGT) serves as a coordination point for ATP. The NMP stretch occupies residues 30–59 (AIGDIFRTIIKTSTSEAELINNYVKQGELI). Residues R36, 57–59 (ELI), 85–88 (GYPR), and Q92 each bind AMP. An LID region spans residues 122 to 160 (GRYSCKNCGKIYNRYFVQPKTDNVCDVCGSSTFDYRKDD). R123 is a binding site for ATP. Zn(2+) is bound by residues C126 and C129. Position 132-133 (132-133 (IY)) interacts with ATP. The Zn(2+) site is built by C146 and C149. Residues R157 and R168 each contribute to the AMP site. K196 is an ATP binding site.

This sequence belongs to the adenylate kinase family. Monomer.

Its subcellular location is the cytoplasm. It carries out the reaction AMP + ATP = 2 ADP. It participates in purine metabolism; AMP biosynthesis via salvage pathway; AMP from ADP: step 1/1. In terms of biological role, catalyzes the reversible transfer of the terminal phosphate group between ATP and AMP. Plays an important role in cellular energy homeostasis and in adenine nucleotide metabolism. In Rickettsia conorii (strain ATCC VR-613 / Malish 7), this protein is Adenylate kinase.